The primary structure comprises 284 residues: Undecaprenyl-diphosphatase (284 aa).

The next 8 helical transmembrane spans lie at 1-21 (MNWLHAIILGIVEGITEFLPV), 43-63 (ITAFTAIIQVGAIIAAILYFW), 88-108 (YTLGWGIILGSIPVGVVGLVF), 116-136 (LSSLWVVAIALILWSGVMWLG), 149-169 (IGIVDAIVIGCFQALAPLFPG), 193-213 (LSFFMGIPALVAAGIYESVSA), 225-245 (VAIGWGPTILATVVSLIVAYV), and 259-279 (FTGFMWYRVVVGLIIIGLILS).

The protein belongs to the UppP family.

It is found in the cell membrane. It carries out the reaction di-trans,octa-cis-undecaprenyl diphosphate + H2O = di-trans,octa-cis-undecaprenyl phosphate + phosphate + H(+). Its function is as follows. Catalyzes the dephosphorylation of undecaprenyl diphosphate (UPP). Confers resistance to bacitracin. The chain is Undecaprenyl-diphosphatase from Cutibacterium acnes (strain DSM 16379 / KPA171202) (Propionibacterium acnes).